The chain runs to 456 residues: Neurexin-3-beta (456 aa).

Positions 1 to 35 (MHLRIHARRNPPRRPAWTLGIWSLFWGCIVSSVWS) are cleaved as a signal peptide. The Extracellular segment spans residues 36-381 (SSNVASSSSS…EVIRESSSTT (346 aa)). The tract at residues 41–63 (SSSSSPGSHSQHEHHFHGSKHHS) is disordered. Basic residues predominate over residues 52–63 (HEHHFHGSKHHS). The Laminin G-like domain maps to 82-282 (ATYIFGKSGG…NPNIKINGSV (201 aa)). Ca(2+) is bound by residues D134 and I151. A glycan (N-linked (GlcNAc...) asparagine) is linked at N181. 2 residues coordinate Ca(2+): I233 and N235. N-linked (GlcNAc...) asparagine glycosylation is found at N279 and N323. The segment at 316-340 (ATTTTRKNRSTASIQPTSDDLVSSA) is disordered. A compositionally biased stretch (polar residues) spans 325–340 (STASIQPTSDDLVSSA). O-linked (Xyl...) (heparan sulfate) serine glycosylation occurs at S339. A helical membrane pass occupies residues 382-402 (GMVVGIVAAAALCILILLYAM). The Cytoplasmic portion of the chain corresponds to 403 to 456 (YKYRNRDEGSYQVDETRNYISNSAQSNGTLLKEKPPSSKGGHKKQKNKDKEYYV). A disordered region spans residues 424-456 (NSAQSNGTLLKEKPPSSKGGHKKQKNKDKEYYV).

It belongs to the neurexin family. In terms of assembly, weakly interacts with CBLN1 and CBLN2. Very weak binding, if any, to CBLN4. Specific isoforms bind neuroligins NLGN1, NLGN2 and NLGN3. Interacts with CLSTN3. Processed by alpha-secretase leading to the formation of an extracellular soluble protein as well as a C-terminal membrane-embedded fragment (CTF). Proteolysis of these CTFs by gamma-secretase releases intracellular domains (ICDs) and extracellular peptides. Post-translationally, O-glycosylated; contains heparan sulfate. Heparan sulfate attachment is required for synapse development by mediating interactions with neuroligins.

Its subcellular location is the presynaptic cell membrane. The protein resides in the secreted. Neuronal cell surface protein that may be involved in cell recognition and cell adhesion. May mediate intracellular signaling. Functions as part of a trans-synaptic complex by binding to cerebellins and postsynaptic GRID1. This interaction helps regulate the activity of NMDA and AMPA receptors at hippocampal synapses without affecting synapse formation. NRXN3B-CBLN2-GRID1 complex transduce presynaptic signals into postsynaptic AMPAR response. The polypeptide is Neurexin-3-beta (NRXN3) (Bos taurus (Bovine)).